Here is a 361-residue protein sequence, read N- to C-terminus: Protein RecA (361 aa).

77 to 84 (GPESSGKT) contributes to the ATP binding site.

It belongs to the RecA family.

Its subcellular location is the cytoplasm. Can catalyze the hydrolysis of ATP in the presence of single-stranded DNA, the ATP-dependent uptake of single-stranded DNA by duplex DNA, and the ATP-dependent hybridization of homologous single-stranded DNAs. It interacts with LexA causing its activation and leading to its autocatalytic cleavage. This is Protein RecA from Rhizobium rhizogenes (strain K84 / ATCC BAA-868) (Agrobacterium radiobacter).